Here is a 1030-residue protein sequence, read N- to C-terminus: Arrestin domain-containing protein F (1030 aa).

Disordered stretches follow at residues 1–27 and 119–154; these read MEII…GSKR and ENKN…NNPL. Acidic residues predominate over residues 128–137; it reads NFDDGEEDDT. Low complexity predominate over residues 142–152; the sequence is NINNKNNNNNN. 2 coiled-coil regions span residues 320–374 and 544–577; these read HQLE…HNNN and QKLN…IRDQ. Disordered regions lie at residues 539–572 and 885–931; these read SPQS…NSES and NNEK…NNNN. A compositionally biased stretch (basic and acidic residues) spans 547-562; it reads NKKDKEKEKEKEKEND. Residues 910-931 show a composition bias toward low complexity; the sequence is SPSSSSFLSNSSNTSSSKNNNN.

It belongs to the arrestin family.

In Dictyostelium discoideum (Social amoeba), this protein is Arrestin domain-containing protein F (adcF).